The following is a 467-amino-acid chain: Sodium-dependent phosphate transport protein 1 (467 aa).

Residues asparagine 41, asparagine 49, and asparagine 58 are each glycosylated (N-linked (GlcNAc...) asparagine). The next 10 helical transmembrane spans lie at 81-101 (GIILSSTSYGVIIIQVPVGYF), 119-139 (SVLSLLIPPAAGIGVAWVVVC), 178-198 (FLLGPFIVLLVTGVICESLGW), 200-220 (MVFYIFGACGCAVCLLWFVLF), 257-277 (AILKSLPVWAISTGSFTFFWS), 301-321 (GFLSSLPYLFAWICGNLAGQL), 339-359 (LFTAAGFLLPAIFGVCLPYLS), 365-385 (IVIFLILAGATGSFCLGGVFI), 401-421 (CSTLTGMIGGLIASTLTGLIL), and 433-453 (FILMAAINVTGLIFYLIVATA).

Belongs to the major facilitator superfamily. Sodium/anion cotransporter family. In terms of assembly, interacts with PDZK1. In terms of tissue distribution, expressed in kidney cortex, liver and brain but not in other tissues.

Its subcellular location is the apical cell membrane. The enzyme catalyses 3 Na(+)(out) + phosphate(out) = 3 Na(+)(in) + phosphate(in). It carries out the reaction urate(out) = urate(in). Important for the resorption of phosphate by the kidney. May be involved in actively transporting phosphate into cells via Na(+) cotransport in the renal brush border membrane. Plays a role in urate transport in the kidney. This chain is Sodium-dependent phosphate transport protein 1 (SLC17A1), found in Homo sapiens (Human).